Reading from the N-terminus, the 409-residue chain is Argininosuccinate synthase (409 aa).

Residues 10–18 (AYSGGLDTS) and A37 contribute to the ATP site. Positions 90 and 95 each coordinate L-citrulline. ATP is bound at residue G120. Residues T122, N126, and D127 each coordinate L-aspartate. N126 is a binding site for L-citrulline. The L-citrulline site is built by R130, S182, S191, E267, and Y279.

This sequence belongs to the argininosuccinate synthase family. Type 1 subfamily. As to quaternary structure, homotetramer.

It is found in the cytoplasm. It carries out the reaction L-citrulline + L-aspartate + ATP = 2-(N(omega)-L-arginino)succinate + AMP + diphosphate + H(+). It participates in amino-acid biosynthesis; L-arginine biosynthesis; L-arginine from L-ornithine and carbamoyl phosphate: step 2/3. The chain is Argininosuccinate synthase from Azoarcus sp. (strain BH72).